We begin with the raw amino-acid sequence, 520 residues long: 2-isopropylmalate synthase (520 aa).

One can recognise a Pyruvate carboxyltransferase domain in the interval 4 to 266; it reads VEFLDTTLRD…TSDIVLNETV (263 aa). Mn(2+)-binding residues include Asp-13, His-201, His-203, and Asn-237. A regulatory domain region spans residues 390–520; sequence HFGDLKLTSN…AVSFRDVPTN (131 aa).

This sequence belongs to the alpha-IPM synthase/homocitrate synthase family. LeuA type 1 subfamily. As to quaternary structure, homodimer. Mn(2+) serves as cofactor.

It is found in the cytoplasm. It carries out the reaction 3-methyl-2-oxobutanoate + acetyl-CoA + H2O = (2S)-2-isopropylmalate + CoA + H(+). The protein operates within amino-acid biosynthesis; L-leucine biosynthesis; L-leucine from 3-methyl-2-oxobutanoate: step 1/4. Its function is as follows. Catalyzes the condensation of the acetyl group of acetyl-CoA with 3-methyl-2-oxobutanoate (2-ketoisovalerate) to form 3-carboxy-3-hydroxy-4-methylpentanoate (2-isopropylmalate). The polypeptide is 2-isopropylmalate synthase (Streptococcus gallolyticus (strain UCN34)).